Consider the following 128-residue polypeptide: Diacylglycerol kinase (128 aa).

E34 provides a ligand contact to a divalent metal cation. Transmembrane regions (helical) follow at residues 35-55 (SAFR…SYLT) and 58-78 (FLEW…ELIN). E75 (proton acceptor) is an active-site residue. Residue E82 coordinates a divalent metal cation. Residues 108-128 (LIGLIFWAFIWGRYLLTLYFN) form a helical membrane-spanning segment.

The protein belongs to the bacterial diacylglycerol kinase family. The cofactor is Mg(2+).

The protein resides in the cell inner membrane. It carries out the reaction a 1,2-diacyl-sn-glycerol + ATP = a 1,2-diacyl-sn-glycero-3-phosphate + ADP + H(+). In terms of biological role, catalyzes the ATP-dependent phosphorylation of sn-l,2-diacylglycerol (DAG) to phosphatidic acid. Involved in the recycling of diacylglycerol produced as a by-product during membrane-derived oligosaccharide (MDO) biosynthesis. The chain is Diacylglycerol kinase (dgkA) from Helicobacter pylori (strain J99 / ATCC 700824) (Campylobacter pylori J99).